The following is a 199-amino-acid chain: Homeobox protein ceh-19 (199 aa).

Positions 1–42 are disordered; the sequence is MAFNIESLLEKKSNPVEEGNDFEEENDSEKNGEEDEEEEEKN. Acidic residues predominate over residues 18–40; sequence EGNDFEEENDSEKNGEEDEEEEE. Residues 94–153 constitute a DNA-binding region (homeobox); the sequence is ERKPRQAYSARQLDRLETEFQTDKYLSVNKRIQLSQTLNLTETQIKTWFQNRRTKWKKQL.

It is found in the nucleus. Probable transcription factor. Required for MC motor neuron differentiation and function, including role in modulating pharyngeal pumping. Regulates gene expression of FMRFamide-like neuropeptide flp-2 in MC motor neurons. May act downstream of transcription factor pha-4. This is Homeobox protein ceh-19 (ceh-19) from Caenorhabditis elegans.